We begin with the raw amino-acid sequence, 64 residues long: Conotoxin Im11.4 (64 aa).

An N-terminal signal peptide occupies residues Met-1–Ala-26. 4 disulfides stabilise this stretch: Cys-27–Cys-41, Cys-34–Cys-46, Cys-40–Cys-50, and Cys-45–Cys-54. At His-57 the chain carries Histidine amide. Residues Ala-61–Gln-64 constitute a propeptide that is removed on maturation.

Belongs to the conotoxin I2 superfamily. As to expression, expressed by the venom duct.

The protein resides in the secreted. The chain is Conotoxin Im11.4 from Conus imperialis (Imperial cone).